The primary structure comprises 348 residues: Phosphoribosylformylglycinamidine cyclo-ligase (348 aa).

This sequence belongs to the AIR synthase family.

Its subcellular location is the cytoplasm. It catalyses the reaction 2-formamido-N(1)-(5-O-phospho-beta-D-ribosyl)acetamidine + ATP = 5-amino-1-(5-phospho-beta-D-ribosyl)imidazole + ADP + phosphate + H(+). Its pathway is purine metabolism; IMP biosynthesis via de novo pathway; 5-amino-1-(5-phospho-D-ribosyl)imidazole from N(2)-formyl-N(1)-(5-phospho-D-ribosyl)glycinamide: step 2/2. The chain is Phosphoribosylformylglycinamidine cyclo-ligase from Geobacter metallireducens (strain ATCC 53774 / DSM 7210 / GS-15).